A 342-amino-acid chain; its full sequence is Flavanone 3-dioxygenase 2 (342 aa).

Residues 193–293 enclose the Fe2OG dioxygenase domain; that stretch reads QEQHMAVNYY…RMSVASFLCP (101 aa). Fe cation is bound by residues H217, D219, and H274. A 2-oxoglutarate-binding site is contributed by R284.

This sequence belongs to the iron/ascorbate-dependent oxidoreductase family. Fe(2+) is required as a cofactor. The cofactor is L-ascorbate. Expressed in roots, leaves and stems. Expressed at low levels in seeds.

The catalysed reaction is a (2S)-flavan-4-one + 2-oxoglutarate + O2 = a (2R,3R)-dihydroflavonol + succinate + CO2. It participates in secondary metabolite biosynthesis; flavonoid biosynthesis. Catalyzes the 3-beta-hydroxylation of 2S-flavanones to 2R,3R-dihydroflavonols which are intermediates in the biosynthesis of flavonols, anthocyanidins, catechins and proanthocyanidins in plants. Converts (2S)-eriodictyol to (+)-taxifolin and (2S)-naringenin to (+)-(2R/3R)-dihydrokaempferol in vitro. This chain is Flavanone 3-dioxygenase 2, found in Oryza sativa subsp. japonica (Rice).